Reading from the N-terminus, the 343-residue chain is Biotin synthase (343 aa).

A Radical SAM core domain is found at 64–291; sequence NTVQLSTLLS…RAMVRLSAGR (228 aa). [4Fe-4S] cluster contacts are provided by cysteine 79, cysteine 83, and cysteine 86. Positions 123, 154, 214, and 286 each coordinate [2Fe-2S] cluster.

This sequence belongs to the radical SAM superfamily. Biotin synthase family. In terms of assembly, homodimer. [4Fe-4S] cluster is required as a cofactor. Requires [2Fe-2S] cluster as cofactor.

It carries out the reaction (4R,5S)-dethiobiotin + (sulfur carrier)-SH + 2 reduced [2Fe-2S]-[ferredoxin] + 2 S-adenosyl-L-methionine = (sulfur carrier)-H + biotin + 2 5'-deoxyadenosine + 2 L-methionine + 2 oxidized [2Fe-2S]-[ferredoxin]. It functions in the pathway cofactor biosynthesis; biotin biosynthesis; biotin from 7,8-diaminononanoate: step 2/2. Its function is as follows. Catalyzes the conversion of dethiobiotin (DTB) to biotin by the insertion of a sulfur atom into dethiobiotin via a radical-based mechanism. The protein is Biotin synthase of Cupriavidus necator (strain ATCC 17699 / DSM 428 / KCTC 22496 / NCIMB 10442 / H16 / Stanier 337) (Ralstonia eutropha).